The chain runs to 128 residues: Large ribosomal subunit protein uL22 (128 aa).

This sequence belongs to the universal ribosomal protein uL22 family. As to quaternary structure, part of the 50S ribosomal subunit.

This protein binds specifically to 23S rRNA; its binding is stimulated by other ribosomal proteins, e.g. L4, L17, and L20. It is important during the early stages of 50S assembly. It makes multiple contacts with different domains of the 23S rRNA in the assembled 50S subunit and ribosome. Its function is as follows. The globular domain of the protein is located near the polypeptide exit tunnel on the outside of the subunit, while an extended beta-hairpin is found that lines the wall of the exit tunnel in the center of the 70S ribosome. This chain is Large ribosomal subunit protein uL22, found in Rhodopseudomonas palustris (strain HaA2).